The sequence spans 300 residues: Protein YIF1B (300 aa).

The disordered stretch occupies residues 1–46; sequence MNQESSFRAPPKRRVRGPNPNISTPHQLFDDTSGGPVPHGGEYPNH. The Cytoplasmic portion of the chain corresponds to 1–142; it reads MNQESSFRAP…APRFDINAPD (142 aa). A helical transmembrane segment spans residues 143–163; the sequence is LYIPVMAFITYILVAGLALGT. Residues 164–178 lie on the Extracellular side of the membrane; the sequence is QSRFSPEILGMQASS. A helical transmembrane segment spans residues 179–199; it reads ALAWLIVEVLAILLSLYLVTV. The Cytoplasmic segment spans residues 200–205; that stretch reads NTDLTT. The helical transmembrane segment at 206-226 threads the bilayer; the sequence is VDLVAFSGYKYVGMISGVISG. Leu227 is a topological domain (extracellular). Residues 228–248 traverse the membrane as a helical segment; that stretch reads LFGKTGYYVVLSWCGISVVFF. At 249–278 the chain is on the cytoplasmic side; that stretch reads MIRTLRLKILSEAAAEGVLVRGARNQLRMY. A helical transmembrane segment spans residues 279-299; the sequence is LTMAIAAVQPIFMYWLTYHLV. A topological domain (extracellular) is located at residue Arg300.

The protein belongs to the YIF1 family.

It localises to the endoplasmic reticulum membrane. The protein localises to the golgi apparatus membrane. The protein resides in the endoplasmic reticulum-Golgi intermediate compartment membrane. Its function is as follows. Functions in endoplasmic reticulum to Golgi vesicle-mediated transport and regulates the proper organization of the endoplasmic reticulum and the Golgi. Plays a key role in targeting to neuronal dendrites receptors such as HTR1A. Plays also a role in primary cilium and sperm flagellum assembly probably through protein transport to these compartments. This chain is Protein YIF1B (yif1b), found in Xenopus tropicalis (Western clawed frog).